The primary structure comprises 311 residues: tRNA-cytidine(32) 2-sulfurtransferase (311 aa).

The short motif at 47-52 (SGGKDS) is the PP-loop motif element. Cys-122, Cys-125, and Cys-213 together coordinate [4Fe-4S] cluster.

Belongs to the TtcA family. In terms of assembly, homodimer. The cofactor is Mg(2+). Requires [4Fe-4S] cluster as cofactor.

Its subcellular location is the cytoplasm. The catalysed reaction is cytidine(32) in tRNA + S-sulfanyl-L-cysteinyl-[cysteine desulfurase] + AH2 + ATP = 2-thiocytidine(32) in tRNA + L-cysteinyl-[cysteine desulfurase] + A + AMP + diphosphate + H(+). Its pathway is tRNA modification. Functionally, catalyzes the ATP-dependent 2-thiolation of cytidine in position 32 of tRNA, to form 2-thiocytidine (s(2)C32). The sulfur atoms are provided by the cysteine/cysteine desulfurase (IscS) system. The polypeptide is tRNA-cytidine(32) 2-sulfurtransferase (Shigella boydii serotype 18 (strain CDC 3083-94 / BS512)).